The primary structure comprises 741 residues: Protein lin-54 homolog (741 aa).

The 114-residue stretch at 513-626 folds into the CRC domain; it reads PRKPCNCTKS…KCIGCKNFEE (114 aa). A DNA-binding region spans residues 515-528; the sequence is KPCNCTKSLCLKLY. Zn(2+) contacts are provided by C517, C519, C524, C529, C531, C538, C541, C543, and C546. The linker stretch occupies residues 575 to 588; it reads IGKGKEGESDRRHS. The Zn(2+) site is built by C591, C593, C598, C603, C605, C612, C616, C618, and C621. Residues 591–604 are DNA-binding; sequence CNCKRSGCLKNYCE.

This sequence belongs to the lin-54 family. In terms of assembly, component of the DREAM complex.

The protein localises to the nucleus. Component of the DREAM complex, a multiprotein complex that can both act as a transcription activator or repressor depending on the context. Specifically recognizes the consensus motif 5'-TTYRAA-3' in target DNA. The chain is Protein lin-54 homolog (lin54) from Xenopus tropicalis (Western clawed frog).